A 919-amino-acid chain; its full sequence is DNA-directed RNA polymerase 132 kDa polypeptide (919 aa).

This sequence belongs to the RNA polymerase beta chain family. The DNA-dependent RNA polymerase used for intermediate and late genes expression consists of eight subunits (147) kDa, (133) kDa, (35) kDa, (30) kDa, (22) kDa, (19) kDa, (18) kDa and (7) kDa totalling more than 500 kDa in mass. The same holoenzyme, with the addition of the transcription-specificity factor RAP94, is used for early gene expression.

The protein resides in the virion. The catalysed reaction is RNA(n) + a ribonucleoside 5'-triphosphate = RNA(n+1) + diphosphate. Functionally, part of the DNA-dependent RNA polymerase which catalyzes the transcription of viral DNA into RNA using the four ribonucleoside triphosphates as substrates. Responsible for the transcription of early, intermediate and late genes. DNA-dependent RNA polymerase associates with the early transcription factor (ETF), itself composed of D6 and A7, thereby allowing the early genes transcription. Late transcription, and probably also intermediate transcription, require newly synthesized RNA polymerase. The protein is DNA-directed RNA polymerase 132 kDa polypeptide (RPO132) of Sheeppox virus (strain KS-1) (SPPV).